A 42-amino-acid polypeptide reads, in one-letter code: Photosystem I reaction center subunit IX (42 aa).

The helical transmembrane segment at 7–27 (YLSVAPVLSTLWFVALAGLLI) threads the bilayer.

This sequence belongs to the PsaJ family.

It is found in the plastid. The protein localises to the chloroplast thylakoid membrane. Functionally, may help in the organization of the PsaE and PsaF subunits. The protein is Photosystem I reaction center subunit IX of Atropa belladonna (Belladonna).